A 489-amino-acid chain; its full sequence is Rhamnulokinase (489 aa).

13–17 serves as a coordination point for ATP; sequence ASSGR. A disulfide bridge connects residues cysteine 68 and cysteine 222. Substrate is bound by residues glycine 83 and 236-238; that span reads HDT. The active-site Proton acceptor is aspartate 237. Position 259 (threonine 259) interacts with ATP. Asparagine 296 lines the substrate pocket. Residue glutamine 304 participates in ATP binding. The cysteines at positions 353 and 370 are disulfide-linked. Glycine 402 is an ATP binding site. Cysteine 413 and cysteine 417 form a disulfide bridge.

It belongs to the rhamnulokinase family. In terms of assembly, monomer. Requires Mg(2+) as cofactor.

The catalysed reaction is L-rhamnulose + ATP = L-rhamnulose 1-phosphate + ADP + H(+). It participates in carbohydrate degradation; L-rhamnose degradation; glycerone phosphate from L-rhamnose: step 2/3. In terms of biological role, involved in the catabolism of L-rhamnose (6-deoxy-L-mannose). Catalyzes the transfer of the gamma-phosphate group from ATP to the 1-hydroxyl group of L-rhamnulose to yield L-rhamnulose 1-phosphate. This is Rhamnulokinase from Escherichia coli O1:K1 / APEC.